A 70-amino-acid chain; its full sequence is DNA gyrase inhibitor YacG (70 aa).

C20, C23, C35, and C39 together coordinate Zn(2+).

The protein belongs to the DNA gyrase inhibitor YacG family. As to quaternary structure, interacts with GyrB. Requires Zn(2+) as cofactor.

Its function is as follows. Inhibits all the catalytic activities of DNA gyrase by preventing its interaction with DNA. Acts by binding directly to the C-terminal domain of GyrB, which probably disrupts DNA binding by the gyrase. This Rhizobium leguminosarum bv. trifolii (strain WSM2304) protein is DNA gyrase inhibitor YacG.